A 141-amino-acid polypeptide reads, in one-letter code: Acetyltransferase YE1169 (141 aa).

The region spanning 1-141 (MEIRVFQQSD…GKRLIVDQEY (141 aa)) is the N-acetyltransferase domain.

Belongs to the acetyltransferase family. YpeA subfamily.

The polypeptide is Acetyltransferase YE1169 (Yersinia enterocolitica serotype O:8 / biotype 1B (strain NCTC 13174 / 8081)).